Reading from the N-terminus, the 637-residue chain is MAKVVGIDLGTTNSEVAVMQGGEPVVIPSAEGSTLIPSVVAVNKNGERIVGRQAKNQAILNPENTVYSIKRFMGRKWGEPAGRELPVEADAKRKPYKVIQGNNNEVRVVMGDKDFSPPEVSAMILQKLKSDAEAYLGEKVTEAVITVPAYFNDAQRQATKDAGAIAGLKVLRIINEPTAAALAYGLDKKKDETIAVYDLGGGTFDISILELGEGTFQVKSTAGDTHLGGDDFDQKIIDWLIAEYKKDQGIDLSKDKTALQRLKEAAEKAKIELSTVQQAEINLPFITADASGPKHLNIILTRAKLEQMVMDLVDKSLEPCRQALKDSGKTASEINEVILVGGQTRMPLVQQKVKEFFGKEPNKGVNPDEVVAIGAAIQAGVLKGEVSDVLLLDVIPLTLGIETLGGVSTALITRNTTIPTSKSQVFSTAADNQPSVEIHVLQGERPMAADNRTLGRFMLDGILPAPRGVPQIEVTFDIDANGILSVKAKDKGTGREQKITITASSGLSKEEVEKMTREAEAHAAEDSKRKEEIEARNVADNLAYNAEKTLRDNKDKIPAELNTELESKIAAVRTALQGTDVDAIKTTTQELSTALQSVGSAVYGQQQEQGAPAQEEPSAEGKKNDDEGTVEGEFREV.

A Phosphothreonine; by autocatalysis modification is found at Thr-203. The interval 600-637 (SAVYGQQQEQGAPAQEEPSAEGKKNDDEGTVEGEFREV) is disordered. Residues 604–616 (GQQQEQGAPAQEE) show a composition bias toward low complexity. Residues 619–637 (AEGKKNDDEGTVEGEFREV) show a composition bias toward basic and acidic residues.

Belongs to the heat shock protein 70 family.

Acts as a chaperone. The polypeptide is Chaperone protein DnaK (Dehalococcoides mccartyi (strain ATCC BAA-2266 / KCTC 15142 / 195) (Dehalococcoides ethenogenes (strain 195))).